The following is a 728-amino-acid chain: 1,4-alpha-glucan branching enzyme GlgB (728 aa).

Asp405 acts as the Nucleophile in catalysis. Glu458 acts as the Proton donor in catalysis. Residues Tyr686–Ser712 form a disordered region.

It belongs to the glycosyl hydrolase 13 family. GlgB subfamily. In terms of assembly, monomer.

It carries out the reaction Transfers a segment of a (1-&gt;4)-alpha-D-glucan chain to a primary hydroxy group in a similar glucan chain.. Its pathway is glycan biosynthesis; glycogen biosynthesis. Functionally, catalyzes the formation of the alpha-1,6-glucosidic linkages in glycogen by scission of a 1,4-alpha-linked oligosaccharide from growing alpha-1,4-glucan chains and the subsequent attachment of the oligosaccharide to the alpha-1,6 position. This is 1,4-alpha-glucan branching enzyme GlgB from Enterobacter sp. (strain 638).